Consider the following 281-residue polypeptide: Endonuclease III-like protein 1 (281 aa).

Residues 1–17 constitute a mitochondrion transit peptide; sequence MCAAAPRGGGRAARRLG. A disordered region spans residues 1 to 60; it reads MCAAAPRGGGRAARRLGAATAGSRVPSAAPRYSRRTRRVPIAYEAEPKPESPGPKWEPEN. A compositionally biased stretch (low complexity) spans 15 to 24; that stretch reads RLGAATAGSR. Residues 168–192 enclose the HhH domain; the sequence is KYGGDIPGTVEELVKLPGVGPKMAH. Catalysis depends on Lys-189, which acts as the Nucleophile; for N-glycosylase activity. [4Fe-4S] cluster is bound by residues Cys-259, Cys-266, Cys-269, and Cys-275.

Belongs to the Nth/MutY family. Requires [4Fe-4S] cluster as cofactor.

The protein resides in the nucleus. It is found in the mitochondrion. It catalyses the reaction 2'-deoxyribonucleotide-(2'-deoxyribose 5'-phosphate)-2'-deoxyribonucleotide-DNA = a 3'-end 2'-deoxyribonucleotide-(2,3-dehydro-2,3-deoxyribose 5'-phosphate)-DNA + a 5'-end 5'-phospho-2'-deoxyribonucleoside-DNA + H(+). Its function is as follows. Bifunctional DNA N-glycosylase with associated apurinic/apyrimidinic (AP) lyase function that catalyzes the first step in base excision repair (BER), the primary repair pathway for the repair of oxidative DNA damage. The DNA N-glycosylase activity releases the damaged DNA base from DNA by cleaving the N-glycosidic bond, leaving an AP site. The AP lyase activity cleaves the phosphodiester bond 3' to the AP site by a beta-elimination. Primarily recognizes and repairs oxidative base damage of pyrimidines. In Gallus gallus (Chicken), this protein is Endonuclease III-like protein 1.